The following is a 327-amino-acid chain: Homeotic protein distal-less (327 aa).

The segment at residues 124–183 (MRKPRTIYSSLQLQQLNRRFQRTQYLALPERAELAASLGLTQTQVKIWFQNRRSKYKKMM) is a DNA-binding region (homeobox). Residues 181–303 (KMMKAAQGPG…THHHNPPPQM (123 aa)) are disordered. Over residues 231–249 (LPPGHSPTPSSTPVSELSP) the composition is skewed to low complexity. The span at 266-275 (QKPHWIDHKP) shows a compositional bias: basic and acidic residues. Residues 276–286 (PPQMTPQPPHP) show a composition bias toward pro residues.

As to expression, expressed in the embryo in limb primordia of the head and thoracic segments. Expressed in regions of the larval leg, wing, antennal and haltere disks that form the distal-most regions of the mature structures (in the leg this corresponds to the tarsus and the distal tibia). Found in the optic center of the developing larval brain.

It localises to the nucleus. Functionally, transcription factor that plays a role in larval and adult appendage development. Specifies the identity of ventral appendages (including legs and antennae) and suppresses dorsal appendage development. Involved in patterning the distal-proximal limb axis. May control the adhesive properties of cells during limb morphogenesis. Also has a secondary role in the normal patterning of the wing margin. The protein is Homeotic protein distal-less (Dll) of Drosophila melanogaster (Fruit fly).